The following is a 361-amino-acid chain: Spermidine/putrescine import ATP-binding protein PotA (361 aa).

An ABC transporter domain is found at 7 to 241; it reads IEVRNVSKRY…PQHRFVAQFI (235 aa). 43–50 provides a ligand contact to ATP; it reads GPSGCGKT.

This sequence belongs to the ABC transporter superfamily. Spermidine/putrescine importer (TC 3.A.1.11.1) family. The complex is composed of two ATP-binding proteins (PotA), two transmembrane proteins (PotB and PotC) and a solute-binding protein (PotD).

Its subcellular location is the cell inner membrane. The enzyme catalyses ATP + H2O + polyamine-[polyamine-binding protein]Side 1 = ADP + phosphate + polyamineSide 2 + [polyamine-binding protein]Side 1.. In terms of biological role, part of the ABC transporter complex PotABCD involved in spermidine/putrescine import. Responsible for energy coupling to the transport system. This Pseudomonas fluorescens (strain Pf0-1) protein is Spermidine/putrescine import ATP-binding protein PotA.